The following is a 382-amino-acid chain: Galactokinase (382 aa).

34-37 (EHTD) lines the substrate pocket. 124–130 (GAGLSSS) is a binding site for ATP. S130 and E162 together coordinate Mg(2+). The Proton acceptor role is filled by D174. Position 223 (Y223) interacts with substrate.

It belongs to the GHMP kinase family. GalK subfamily.

The protein resides in the cytoplasm. It carries out the reaction alpha-D-galactose + ATP = alpha-D-galactose 1-phosphate + ADP + H(+). It participates in carbohydrate metabolism; galactose metabolism. Its function is as follows. Catalyzes the transfer of the gamma-phosphate of ATP to D-galactose to form alpha-D-galactose-1-phosphate (Gal-1-P). This Salmonella arizonae (strain ATCC BAA-731 / CDC346-86 / RSK2980) protein is Galactokinase.